The sequence spans 71 residues: Disintegrin halysin (71 aa).

A Disintegrin domain is found at 1 to 71; the sequence is EAGEECDCGS…ISAGCPRNPF (71 aa). 6 disulfides stabilise this stretch: C6–C21, C8–C16, C15–C38, C29–C35, C34–C59, and C47–C66. The short motif at 51-53 is the Cell attachment site element; sequence RGD.

It belongs to the venom metalloproteinase (M12B) family. P-II subfamily. P-IIa sub-subfamily. In terms of assembly, monomer. As to expression, expressed by the venom gland.

The protein resides in the secreted. In terms of biological role, inhibits fibrinogen interaction with platelets. Acts by binding to alpha-IIb/beta-3 (ITGA2B/ITGB3) on the platelet surface and inhibits aggregation induced by ADP, thrombin, platelet-activating factor and collagen. This chain is Disintegrin halysin, found in Gloydius blomhoffii (Mamushi).